A 247-amino-acid polypeptide reads, in one-letter code: NADH-ubiquinone oxidoreductase chain 6 (247 aa).

5 helical membrane-spanning segments follow: residues 18–38 (TMIL…VVRA), 44–64 (SVLF…LLGL), 70–90 (ISPV…VMMF), 104–124 (YLPV…FILD), and 168–188 (VWFL…IVLT).

This sequence belongs to the complex I subunit 6 family.

Its subcellular location is the mitochondrion membrane. The catalysed reaction is a ubiquinone + NADH + 5 H(+)(in) = a ubiquinol + NAD(+) + 4 H(+)(out). Functionally, core subunit of the mitochondrial membrane respiratory chain NADH dehydrogenase (Complex I) that is believed to belong to the minimal assembly required for catalysis. Complex I functions in the transfer of electrons from NADH to the respiratory chain. The immediate electron acceptor for the enzyme is believed to be ubiquinone. The polypeptide is NADH-ubiquinone oxidoreductase chain 6 (ND6) (Triticum aestivum (Wheat)).